A 426-amino-acid polypeptide reads, in one-letter code: Vitamin D3 receptor (426 aa).

The nuclear receptor DNA-binding region spans 21 to 96 (PRICGVCGDR…IGMMKEFILT (76 aa)). Zn(2+) contacts are provided by cysteine 24, cysteine 27, cysteine 41, cysteine 44, cysteine 60, cysteine 66, cysteine 76, and cysteine 79. NR C4-type zinc fingers lie at residues 24–44 (CGVC…CEGC) and 60–84 (CPFN…LKRC). Residues 97-126 (DEEVQRKREMILKRKEEEALKDSLRPKLSE) form a hinge region. An NR LBD domain is found at 127–422 (EQQRIITTLL…LTPLLFEVFG (296 aa)). Tyrosine 143 serves as a coordination point for calcitriol. The tract at residues 147 to 215 (YSDFSQFRPP…NEEDSDDPSV (69 aa)) is disordered. The span at 175 to 191 (SFSGNSSSSCSDHCTSS) shows a compositional bias: low complexity. The span at 192-204 (PDTMEPTSFSNQD) shows a compositional bias: polar residues. A calcitriol-binding site is contributed by serine 235. Positions 244-262 (KMIPGFRDLTPEDQIVLLK) are interaction with coactivator LXXLL motif. Positions 272, 276, 304, and 396 each coordinate calcitriol. Residues 415-423 (PLLFEVFGN) carry the 9aaTAD motif.

The protein belongs to the nuclear hormone receptor family. NR1 subfamily. In terms of assembly, homodimer in the absence of bound vitamin D3. Heterodimer with RXRA after vitamin D3 binding. Interacts with MED1, NCOA1, NCOA2, NCOA3 and NCOA6 coactivators, leading to a strong increase of transcription of target genes. Interacts with the corepressor NCOR1. Interacts with SNW1. Interacts with IRX4, the interaction does not affect its transactivation activity. Interacts with CRY1. Interacts with CRY2 in a ligand-dependent manner. Post-translationally, ubiquitinated by UBR5, leading to its degradation: UBR5 specifically recognizes and binds ligand-bound VDR when it is not associated with coactivators (NCOAs). In presence of NCOAs, the UBR5-degron is not accessible, preventing its ubiquitination and degradation. In terms of tissue distribution, mammary gland, expression increases during lactation. Also found in colon, expression is down-regulated at parturition.

The protein localises to the nucleus. It is found in the cytoplasm. Functionally, nuclear receptor for calcitriol, the active form of vitamin D3 which mediates the action of this vitamin on cells. Enters the nucleus upon vitamin D3 binding where it forms heterodimers with the retinoid X receptor/RXR. The VDR-RXR heterodimers bind to specific response elements on DNA and activate the transcription of vitamin D3-responsive target genes. Plays a central role in calcium homeostasis. Also functions as a receptor for the secondary bile acid lithocholic acid (LCA) and its metabolites. This chain is Vitamin D3 receptor (VDR), found in Bos taurus (Bovine).